A 430-amino-acid chain; its full sequence is Adenylosuccinate synthetase (430 aa).

Residues 12-18 (GDEGKGK) and 40-42 (GHT) each bind GTP. Residue Asp13 is the Proton acceptor of the active site. Mg(2+) is bound by residues Asp13 and Gly40. Residues 13–16 (DEGK), 38–41 (NAGH), Thr128, Arg142, Gln223, Thr238, and Arg302 contribute to the IMP site. The active-site Proton donor is His41. 298 to 304 (TTTGRPR) is a binding site for substrate. GTP contacts are provided by residues Arg304, 330–332 (SID), and 412–414 (SVG).

It belongs to the adenylosuccinate synthetase family. Homodimer. Requires Mg(2+) as cofactor.

It localises to the cytoplasm. It carries out the reaction IMP + L-aspartate + GTP = N(6)-(1,2-dicarboxyethyl)-AMP + GDP + phosphate + 2 H(+). The protein operates within purine metabolism; AMP biosynthesis via de novo pathway; AMP from IMP: step 1/2. Plays an important role in the de novo pathway of purine nucleotide biosynthesis. Catalyzes the first committed step in the biosynthesis of AMP from IMP. This chain is Adenylosuccinate synthetase, found in Streptococcus pyogenes serotype M6 (strain ATCC BAA-946 / MGAS10394).